A 449-amino-acid chain; its full sequence is Methylenetetrahydrofolate--tRNA-(uracil-5-)-methyltransferase TrmFO (449 aa).

9–14 (GGGIAG) serves as a coordination point for FAD.

The protein belongs to the MnmG family. TrmFO subfamily. Requires FAD as cofactor.

The protein localises to the cytoplasm. It carries out the reaction uridine(54) in tRNA + (6R)-5,10-methylene-5,6,7,8-tetrahydrofolate + NADH + H(+) = 5-methyluridine(54) in tRNA + (6S)-5,6,7,8-tetrahydrofolate + NAD(+). The catalysed reaction is uridine(54) in tRNA + (6R)-5,10-methylene-5,6,7,8-tetrahydrofolate + NADPH + H(+) = 5-methyluridine(54) in tRNA + (6S)-5,6,7,8-tetrahydrofolate + NADP(+). Its function is as follows. Catalyzes the folate-dependent formation of 5-methyl-uridine at position 54 (M-5-U54) in all tRNAs. The sequence is that of Methylenetetrahydrofolate--tRNA-(uracil-5-)-methyltransferase TrmFO from Gloeobacter violaceus (strain ATCC 29082 / PCC 7421).